The following is a 190-amino-acid chain: Potassium-transporting ATPase KdpC subunit (190 aa).

A helical transmembrane segment spans residues 10 to 30; the sequence is TFLFLLLITGGVYPLLTTALG.

Belongs to the KdpC family. The system is composed of three essential subunits: KdpA, KdpB and KdpC.

The protein resides in the cell inner membrane. Functionally, part of the high-affinity ATP-driven potassium transport (or Kdp) system, which catalyzes the hydrolysis of ATP coupled with the electrogenic transport of potassium into the cytoplasm. This subunit acts as a catalytic chaperone that increases the ATP-binding affinity of the ATP-hydrolyzing subunit KdpB by the formation of a transient KdpB/KdpC/ATP ternary complex. In Escherichia coli (strain SMS-3-5 / SECEC), this protein is Potassium-transporting ATPase KdpC subunit.